The following is a 300-amino-acid chain: N-acetylmuramic acid 6-phosphate etherase (300 aa).

In terms of domain architecture, SIS spans 57 to 220 (IAVAFQSGGR…TTGAMIRTGK (164 aa)). The Proton donor role is filled by E85. The active site involves E116.

Belongs to the GCKR-like family. MurNAc-6-P etherase subfamily. In terms of assembly, homodimer.

It carries out the reaction N-acetyl-D-muramate 6-phosphate + H2O = N-acetyl-D-glucosamine 6-phosphate + (R)-lactate. Its pathway is amino-sugar metabolism; 1,6-anhydro-N-acetylmuramate degradation. It functions in the pathway amino-sugar metabolism; N-acetylmuramate degradation. It participates in cell wall biogenesis; peptidoglycan recycling. Its function is as follows. Specifically catalyzes the cleavage of the D-lactyl ether substituent of MurNAc 6-phosphate, producing GlcNAc 6-phosphate and D-lactate. Together with AnmK, is also required for the utilization of anhydro-N-acetylmuramic acid (anhMurNAc) either imported from the medium or derived from its own cell wall murein, and thus plays a role in cell wall recycling. In Aliivibrio fischeri (strain MJ11) (Vibrio fischeri), this protein is N-acetylmuramic acid 6-phosphate etherase.